The chain runs to 436 residues: GTPase Der (436 aa).

2 consecutive EngA-type G domains span residues 4–167 and 176–351; these read PVVA…PKRG and IKFC…ENHA. Residues 10–17, 57–61, 119–122, 182–189, 229–233, and 294–297 each bind GTP; these read GRPNVGKS, DTGGI, NKID, DTAGM, and NKWD. Residues 352–436 form the KH-like domain; sequence MRVQTNVLNE…PIKIIARPRK (85 aa).

The protein belongs to the TRAFAC class TrmE-Era-EngA-EngB-Septin-like GTPase superfamily. EngA (Der) GTPase family. Associates with the 50S ribosomal subunit.

Functionally, GTPase that plays an essential role in the late steps of ribosome biogenesis. The protein is GTPase Der of Geobacillus sp. (strain WCH70).